Here is a 246-residue protein sequence, read N- to C-terminus: Probable transcriptional regulatory protein YebC (246 aa).

A disordered region spans residues 1 to 20 (MAGHSKWANTRHRKAAQDAK).

This sequence belongs to the TACO1 family.

Its subcellular location is the cytoplasm. The polypeptide is Probable transcriptional regulatory protein YebC (Shigella flexneri).